The following is a 138-amino-acid chain: Small ribosomal subunit protein uS12 (138 aa).

A 3-methylthioaspartic acid modification is found at aspartate 89. Residues 101-138 are disordered; that stretch reads ALDTAGTQNRNQGRSKYGTKRPKKGAATAAKGPVKGKK. Residues 105–114 are compositionally biased toward polar residues; sequence AGTQNRNQGR. A compositionally biased stretch (low complexity) spans 125–138; that stretch reads GAATAAKGPVKGKK.

It belongs to the universal ribosomal protein uS12 family. As to quaternary structure, part of the 30S ribosomal subunit. Contacts proteins S8 and S17. May interact with IF1 in the 30S initiation complex.

In terms of biological role, with S4 and S5 plays an important role in translational accuracy. Interacts with and stabilizes bases of the 16S rRNA that are involved in tRNA selection in the A site and with the mRNA backbone. Located at the interface of the 30S and 50S subunits, it traverses the body of the 30S subunit contacting proteins on the other side and probably holding the rRNA structure together. The combined cluster of proteins S8, S12 and S17 appears to hold together the shoulder and platform of the 30S subunit. In Heliobacterium modesticaldum (strain ATCC 51547 / Ice1), this protein is Small ribosomal subunit protein uS12.